A 196-amino-acid polypeptide reads, in one-letter code: Pentatricopeptide repeat-containing protein At1g62350 (196 aa).

PPR repeat units follow at residues 70-104 (DMFF…EVLF) and 105-139 (DQHT…PDRP).

This sequence belongs to the PPR family. P subfamily.

This is Pentatricopeptide repeat-containing protein At1g62350 from Arabidopsis thaliana (Mouse-ear cress).